Here is a 799-residue protein sequence, read N- to C-terminus: Elongation factor G, mitochondrial (799 aa).

The transit peptide at 1 to 34 (MRCPSLTRLPYRAVSGLPRSVVRLQSQNFLTRRC) directs the protein to the mitochondrion. The tr-type G domain maps to 97 to 384 (SRVRNIGIAA…GVVDYLPNPA (288 aa)). GTP contacts are provided by residues 106–113 (AHIDSGKT), 182–186 (DTPGH), and 236–239 (NKMD).

This sequence belongs to the TRAFAC class translation factor GTPase superfamily. Classic translation factor GTPase family. EF-G/EF-2 subfamily.

The protein resides in the mitochondrion. It participates in protein biosynthesis; polypeptide chain elongation. Its function is as follows. Mitochondrial GTPase that catalyzes the GTP-dependent ribosomal translocation step during translation elongation. During this step, the ribosome changes from the pre-translocational (PRE) to the post-translocational (POST) state as the newly formed A-site-bound peptidyl-tRNA and P-site-bound deacylated tRNA move to the P and E sites, respectively. Catalyzes the coordinated movement of the two tRNA molecules, the mRNA and conformational changes in the ribosome. The polypeptide is Elongation factor G, mitochondrial (mef1) (Aspergillus flavus (strain ATCC 200026 / FGSC A1120 / IAM 13836 / NRRL 3357 / JCM 12722 / SRRC 167)).